Here is an 89-residue protein sequence, read N- to C-terminus: Myrmicitoxin(1)-Pr2a (89 aa).

Positions 1 to 23 (MEIPKLLYIAVIAIGLSGSLTCA) are cleaved as a signal peptide. The propeptide occupies 24–61 (TPLANPWADPEAEANPEAKAIAEATAEAIAEALAEPEP). Asparagine 88 carries the asparagine amide modification.

The protein belongs to the formicidae venom clade 1 family. As to expression, expressed by the venom gland.

It is found in the secreted. Vertebrate-selective toxin that causes pain by targeting voltage-gated sodium channels. This chain is Myrmicitoxin(1)-Pr2a, found in Pogonomyrmex rugosus (Desert harvester ant).